We begin with the raw amino-acid sequence, 412 residues long: Serine hydroxymethyltransferase (412 aa).

Residues L117 and G121–L123 contribute to the (6S)-5,6,7,8-tetrahydrofolate site. The residue at position 226 (K226) is an N6-(pyridoxal phosphate)lysine.

It belongs to the SHMT family. Homodimer. Pyridoxal 5'-phosphate serves as cofactor.

The protein resides in the cytoplasm. The catalysed reaction is (6R)-5,10-methylene-5,6,7,8-tetrahydrofolate + glycine + H2O = (6S)-5,6,7,8-tetrahydrofolate + L-serine. The protein operates within one-carbon metabolism; tetrahydrofolate interconversion. It functions in the pathway amino-acid biosynthesis; glycine biosynthesis; glycine from L-serine: step 1/1. In terms of biological role, catalyzes the reversible interconversion of serine and glycine with tetrahydrofolate (THF) serving as the one-carbon carrier. This reaction serves as the major source of one-carbon groups required for the biosynthesis of purines, thymidylate, methionine, and other important biomolecules. Also exhibits THF-independent aldolase activity toward beta-hydroxyamino acids, producing glycine and aldehydes, via a retro-aldol mechanism. This chain is Serine hydroxymethyltransferase, found in Staphylococcus epidermidis (strain ATCC 35984 / DSM 28319 / BCRC 17069 / CCUG 31568 / BM 3577 / RP62A).